Consider the following 391-residue polypeptide: Formate-dependent phosphoribosylglycinamide formyltransferase (391 aa).

Residues 18-19 (EL) and glutamate 78 each bind N(1)-(5-phospho-beta-D-ribosyl)glycinamide. Residues arginine 110, lysine 151, 156–161 (SSGKGQ), 191–194 (EEFI), and glutamate 199 contribute to the ATP site. An ATP-grasp domain is found at 115 to 305 (ELVSRDLKIK…EFELHLRAFL (191 aa)). Residues glutamate 264 and glutamate 276 each coordinate Mg(2+). N(1)-(5-phospho-beta-D-ribosyl)glycinamide contacts are provided by residues aspartate 283, lysine 353, and 360–361 (RR).

Belongs to the PurK/PurT family. In terms of assembly, homodimer.

It catalyses the reaction N(1)-(5-phospho-beta-D-ribosyl)glycinamide + formate + ATP = N(2)-formyl-N(1)-(5-phospho-beta-D-ribosyl)glycinamide + ADP + phosphate + H(+). The protein operates within purine metabolism; IMP biosynthesis via de novo pathway; N(2)-formyl-N(1)-(5-phospho-D-ribosyl)glycinamide from N(1)-(5-phospho-D-ribosyl)glycinamide (formate route): step 1/1. Involved in the de novo purine biosynthesis. Catalyzes the transfer of formate to 5-phospho-ribosyl-glycinamide (GAR), producing 5-phospho-ribosyl-N-formylglycinamide (FGAR). Formate is provided by PurU via hydrolysis of 10-formyl-tetrahydrofolate. The chain is Formate-dependent phosphoribosylglycinamide formyltransferase from Prochlorococcus marinus (strain MIT 9312).